The primary structure comprises 344 residues: uncharacterized protein (344 aa).

Residues 95–344 (TINPEDANED…TPAKKNSKGR (250 aa)) are disordered. A compositionally biased stretch (basic and acidic residues) spans 103–123 (EDAKVKNSLKLEKEEGSDEKS). Residues 135–155 (SDDESDNSNDSEESEAEDSDQ) are compositionally biased toward acidic residues. Low complexity predominate over residues 191–200 (SAKNAKASKP). Positions 244–259 (SEDEDSGSDNSEEESE) are enriched in acidic residues. Over residues 265-276 (ASSKKPPSKSSK) the composition is skewed to basic residues. A compositionally biased stretch (acidic residues) spans 281 to 314 (EDEDEDSGQSESEHSEEESNSDEDSGQSEEESEE). Residues 331-344 (TAKKTPAKKNSKGR) show a composition bias toward basic residues.

This is an uncharacterized protein from Acanthamoeba polyphaga (Amoeba).